An 83-amino-acid polypeptide reads, in one-letter code: Small ribosomal subunit protein uS17 (83 aa).

This sequence belongs to the universal ribosomal protein uS17 family. As to quaternary structure, part of the 30S ribosomal subunit.

One of the primary rRNA binding proteins, it binds specifically to the 5'-end of 16S ribosomal RNA. In Campylobacter curvus (strain 525.92), this protein is Small ribosomal subunit protein uS17.